Here is a 396-residue protein sequence, read N- to C-terminus: Ribosomal RNA large subunit methyltransferase I (396 aa).

The PUA domain occupies 2 to 81 (SVRLVLAKGR…ESIDIAFFSR (80 aa)).

It belongs to the methyltransferase superfamily. RlmI family.

The protein resides in the cytoplasm. It carries out the reaction cytidine(1962) in 23S rRNA + S-adenosyl-L-methionine = 5-methylcytidine(1962) in 23S rRNA + S-adenosyl-L-homocysteine + H(+). In terms of biological role, specifically methylates the cytosine at position 1962 (m5C1962) of 23S rRNA. The protein is Ribosomal RNA large subunit methyltransferase I of Escherichia coli (strain K12 / MC4100 / BW2952).